Reading from the N-terminus, the 208-residue chain is Methyl-CpG-binding domain protein 3-like 2 (208 aa).

The segment at 1 to 89 is interacts with MBD3; the sequence is MGEPAFTSFP…HLEKPQQLCA (89 aa).

This sequence belongs to the MBD3L family. Interacts (via N-terminus) with MBD3; the interaction is direct. Interacts with MTA1. Interacts with HDAC1. Interacts with HDAC2. Interacts with RBBP4. Interacts with RBBP7. Detected at low levels in several somatic tissues. Highly expressed in the ovarian teratocarcinoma cell line PA-1.

It localises to the nucleus. Functionally, may displace the NuRD complex from chromatin. This chain is Methyl-CpG-binding domain protein 3-like 2 (MBD3L2), found in Homo sapiens (Human).